The following is a 156-amino-acid chain: Small ribosomal subunit protein uS7 (156 aa).

The protein belongs to the universal ribosomal protein uS7 family. As to quaternary structure, part of the 30S ribosomal subunit. Contacts proteins S9 and S11.

Functionally, one of the primary rRNA binding proteins, it binds directly to 16S rRNA where it nucleates assembly of the head domain of the 30S subunit. Is located at the subunit interface close to the decoding center, probably blocks exit of the E-site tRNA. This chain is Small ribosomal subunit protein uS7, found in Clostridioides difficile (strain 630) (Peptoclostridium difficile).